Consider the following 140-residue polypeptide: MHRVTITLDDDLMERLDAIIAVRGYQNRSEAIRDLARIGIQQTSAHDSGERCVGAMVYTYDHSKRDLPRKLTQSFHNHHDLSRATMHVHLDHDQCLEVTILDGKASELQHFADHIFSERGVRYGRLVTIPTMDDEQHTHD.

Ni(2+)-binding residues include His-76, His-87, His-89, and Cys-95.

This sequence belongs to the transcriptional regulatory CopG/NikR family. The cofactor is Ni(2+).

Its function is as follows. Transcriptional regulator. The chain is Putative nickel-responsive regulator from Rhodopseudomonas palustris (strain BisB5).